Reading from the N-terminus, the 504-residue chain is UNC93-like protein C922.05c (504 aa).

The next 11 helical transmembrane spans lie at 64-84, 97-116, 123-145, 149-169, 186-206, 219-239, 275-293, 310-330, 343-363, 391-411, and 452-472; these read IIVSWVCFLCPGMFNALSGLG, ANVALYSTFAGLGFFAGSIC, LTLAIGGTGYSVYTASLLCYKHV, GFVIFGGCYLGLTAGMLWAAQ, IAIFWGIFNLGAVIGSIVPLA, GTYAGFIVLMAVGSALALFMV, YWVLLLFPMFFSSNWFTTY, LNNLLYWFAQIMGSAVAALFL, VGWGLVFVLICVIWGGGLAFQ, FLYIFYGMLDAIFQSYAYWII, and YFASCWALLCGSLIVASPVIW.

Belongs to the unc-93 family.

Its subcellular location is the cytoplasm. The protein resides in the membrane. The chain is UNC93-like protein C922.05c from Schizosaccharomyces pombe (strain 972 / ATCC 24843) (Fission yeast).